The following is a 281-amino-acid chain: Large ribosomal subunit protein uL2 (281 aa).

The tract at residues 208–281 is disordered; the sequence is AGRSRYAGQR…RGRKRGPHTR (74 aa). Basic residues predominate over residues 254–281; sequence TVGKKTRSHKARSNKFIVRGRKRGPHTR.

Belongs to the universal ribosomal protein uL2 family. Part of the 50S ribosomal subunit. Forms a bridge to the 30S subunit in the 70S ribosome.

Its function is as follows. One of the primary rRNA binding proteins. Required for association of the 30S and 50S subunits to form the 70S ribosome, for tRNA binding and peptide bond formation. It has been suggested to have peptidyltransferase activity; this is somewhat controversial. Makes several contacts with the 16S rRNA in the 70S ribosome. This Limosilactobacillus fermentum (strain NBRC 3956 / LMG 18251) (Lactobacillus fermentum) protein is Large ribosomal subunit protein uL2.